A 148-amino-acid chain; its full sequence is Antitoxin Xre (148 aa).

Belongs to the MbcA/ParS/Xre antitoxin family. As to quaternary structure, homodimer. Forms a complex with cognate toxin Rse.

Its function is as follows. Antitoxin component of a type II toxin-antitoxin (TA) system. Neutralizes the activity of cognate toxin Res. The polypeptide is Antitoxin Xre (Yersinia enterocolitica serotype O:8 / biotype 1B (strain NCTC 13174 / 8081)).